A 255-amino-acid polypeptide reads, in one-letter code: MTGIVELDLRMLKKKTAMSKRTVLNENYKGIVESMSIPAEIHERNGKKYASVGSILPIHCCPPEELERRAESTHHYCGVFTDELLAPLEELAYVRLDENTAEKVFINRAKRILIVSSDGHLAQWRCAPTFESANRYIAGTPIVDQRGGVISVVVAKKNNHYAVSSFEGEGGYFESTQNWKVVEPAAGGYAYGELTFPSRTALREHVAGLRGGAGAWGDAVPVLRGGTSPRLALVLDGRQLAHYYLHNVIVDVEYL.

It belongs to the poxin family. Highly divergent.

The catalysed reaction is 2',3'-cGAMP + H2O = Gp(2'-5')Ap(3') + H(+). Its function is as follows. Nuclease that cleaves 2',3'-cGAMP. This is Poxin from Bombyx mori (Silk moth).